The primary structure comprises 525 residues: Ankyrin repeat and SOCS box protein 3 (525 aa).

ANK repeat units follow at residues 9 to 38, 42 to 71, 78 to 107, 111 to 140, 145 to 174, 178 to 207, 211 to 240, 246 to 275, 279 to 308, 315 to 346, and 348 to 373; these read DTCS…SIDV, RGWM…SENY, EGFC…DPNA, EETT…NVNG, CGWN…NKEC, FGIT…DVNC, DKAT…DPDL, NWQL…RVCD, NKVS…SPDA, GFSS…QLNE, and HLAY…PSTP. Residues 441–505 form the SOCS box domain; it reads MLSARASNSS…HDYLLYAEVL (65 aa).

It belongs to the ankyrin SOCS box (ASB) family. Interacts with ELOB and TNFRSF1B.

The protein operates within protein modification; protein ubiquitination. Probable substrate-recognition component of a SCF-like ECS (Elongin-Cullin-SOCS-box protein) E3 ubiquitin-protein ligase complex which mediates the ubiquitination and subsequent proteasomal degradation of target proteins. Recognizes TNFRSF1B. The chain is Ankyrin repeat and SOCS box protein 3 (ASB3) from Bos taurus (Bovine).